The primary structure comprises 454 residues: MSTFKNEMNGNNLLHVAVLAFPFGTHAAPLLSLVKKIATEAPKVTFSFFCTTTTNDTLFSRSNEFLPNIKYYNVHDGLPKGYVSSGNPREPIFLFIKAMQENFKHVIDEAVAETGKNITCLVTDAFFWFGADLAEEMHAKWVPLWTAGPHSLLTHVYTDLIREKTGSKEVHDVKSIDVLPGFPELKASDLPEGVIKDIDVPFATMLHKMGLELPRANAVAINSFATIHPLIENELNSKFKLLLNVGPFNLTTPQRKVSDEHGCLEWLDQHENSSVVYISFGSVVTPPPHELTALAESLEECGFPFIWSFRGDPKEKLPKGFLERTKTKGKIVAWAPQVEILKHSSVGVFLTHSGWNSVLECIVGGVPMISRPFFGDQGLNTILTESVLEIGVGVDNGVLTKESIKKALELTMSSEKGGIMRQKIVKLKESAFKAVEQNGTSAMDFTTLIQIVTS.

Position 25 (T25) interacts with UDP. H26 (proton acceptor) is an active-site residue. R89 is a binding site for myricetin. Catalysis depends on D124, which acts as the Charge relay. The myricetin site is built by H155, E192, and F202. Residues S282, S308, W334, and A335 each coordinate UDP. The UDP-alpha-D-glucose site is built by A335, Q337, H352, W355, N356, S357, and E360. H352 lines the UDP pocket. 3 residues coordinate UDP: N356, S357, and E360. Position 375 (G375) interacts with myricetin. UDP-alpha-D-glucose is bound by residues D376 and Q377.

The protein belongs to the UDP-glycosyltransferase family. In terms of tissue distribution, highly expressed in flower buds, flowers and pods. Lower expression in leaves, petioles and stems.

It participates in secondary metabolite biosynthesis; flavonoid biosynthesis. Functionally, catalyzes the glycosylation of flavonoids at the 3-O-position. Glycosylates the 7-O-position if the 3-O-position is not available. Also able to perform 3-O-glycosylation of anthocyanidins. The protein is Flavonoid 3-O-glucosyltransferase (UGT78G1) of Medicago truncatula (Barrel medic).